A 447-amino-acid chain; its full sequence is Cysteine--tRNA ligase (447 aa).

Cys28 is a binding site for Zn(2+). A 'HIGH' region motif is present at residues 30-40; sequence PTVYNYIHIGN. The Zn(2+) site is built by Cys211, His236, and Glu240. The short motif at 268 to 272 is the 'KMSKS' region element; it reads KMSKS. Residue Lys271 coordinates ATP.

The protein belongs to the class-I aminoacyl-tRNA synthetase family. In terms of assembly, monomer. It depends on Zn(2+) as a cofactor.

It is found in the cytoplasm. The enzyme catalyses tRNA(Cys) + L-cysteine + ATP = L-cysteinyl-tRNA(Cys) + AMP + diphosphate. The protein is Cysteine--tRNA ligase of Streptococcus pyogenes serotype M6 (strain ATCC BAA-946 / MGAS10394).